The following is a 377-amino-acid chain: Queuine tRNA-ribosyltransferase (377 aa).

D89 functions as the Proton acceptor in the catalytic mechanism. Substrate-binding positions include 89–93 (DSGGF), D143, Q187, and G214. The RNA binding stretch occupies residues 245–251 (GVGKPED). The Nucleophile role is filled by D264. Positions 269 to 273 (TRNAR) are RNA binding; important for wobble base 34 recognition. Residues C302, C304, C307, and H333 each coordinate Zn(2+).

This sequence belongs to the queuine tRNA-ribosyltransferase family. Homodimer. Within each dimer, one monomer is responsible for RNA recognition and catalysis, while the other monomer binds to the replacement base PreQ1. Requires Zn(2+) as cofactor.

It carries out the reaction 7-aminomethyl-7-carbaguanine + guanosine(34) in tRNA = 7-aminomethyl-7-carbaguanosine(34) in tRNA + guanine. Its pathway is tRNA modification; tRNA-queuosine biosynthesis. Functionally, catalyzes the base-exchange of a guanine (G) residue with the queuine precursor 7-aminomethyl-7-deazaguanine (PreQ1) at position 34 (anticodon wobble position) in tRNAs with GU(N) anticodons (tRNA-Asp, -Asn, -His and -Tyr). Catalysis occurs through a double-displacement mechanism. The nucleophile active site attacks the C1' of nucleotide 34 to detach the guanine base from the RNA, forming a covalent enzyme-RNA intermediate. The proton acceptor active site deprotonates the incoming PreQ1, allowing a nucleophilic attack on the C1' of the ribose to form the product. After dissociation, two additional enzymatic reactions on the tRNA convert PreQ1 to queuine (Q), resulting in the hypermodified nucleoside queuosine (7-(((4,5-cis-dihydroxy-2-cyclopenten-1-yl)amino)methyl)-7-deazaguanosine). In Shewanella denitrificans (strain OS217 / ATCC BAA-1090 / DSM 15013), this protein is Queuine tRNA-ribosyltransferase.